The sequence spans 509 residues: Scavenger receptor class B member 1 (509 aa).

Residues 1-11 (MGSRSRARQVA) lie on the Cytoplasmic side of the membrane. The helical transmembrane segment at 12–32 (AALGFVGLLLAALGAVMIVMV) threads the bilayer. The Extracellular segment spans residues 33 to 439 (PSIIKQQVLK…FYTQLVLMPK (407 aa)). N-linked (GlcNAc...) asparagine glycans are attached at residues Asn102, Asn108, Asn173, Asn212, Asn255, Asn310, Asn330, and Asn383. Cys251 and Cys384 are oxidised to a cystine. The chain crosses the membrane as a helical span at residues 440–460 (VLHYAQYVLLALGCVLLFIPI). Residues 461–509 (VYQIRSQEKCYLFWSSSKKGSKDKEAIQAYSESLMTPAPKGTVLQEARL) are Cytoplasmic-facing.

This sequence belongs to the CD36 family. In terms of assembly, the C-terminal region binds to PDZK1. N-glycosylated. Post-translationally, the six cysteines of the extracellular domain are all involved in intramolecular disulfide bonds.

Its subcellular location is the cell membrane. It localises to the membrane. The protein resides in the caveola. In terms of biological role, receptor for different ligands such as phospholipids, cholesterol ester, lipoproteins, phosphatidylserine and apoptotic cells. Receptor for HDL, mediating selective uptake of cholesteryl ether and HDL-dependent cholesterol efflux. Also facilitates the flux of free and esterified cholesterol between the cell surface and apoB-containing lipoproteins and modified lipoproteins, although less efficiently than HDL. May be involved in the phagocytosis of apoptotic cells, via its phosphatidylserine binding activity. The protein is Scavenger receptor class B member 1 (SCARB1) of Sus scrofa (Pig).